The primary structure comprises 307 residues: Potassium channel subfamily K member 7 (307 aa).

Residues 1–10 lie on the Cytoplasmic side of the membrane; that stretch reads MGSLKPWARY. A helical membrane pass occupies residues 11–31; that stretch reads LLLLMAHLLAMGLGAVVLQAL. Asparagine 83 carries an N-linked (GlcNAc...) asparagine glycan. Residues 92–118 constitute an intramembrane region (pore-forming); sequence LPSALLFTASILTTTGYGHMAPLSSGG. The helical transmembrane segment at 120–140 threads the bilayer; the sequence is AFCVVYAALGLPASLALVAAL. Over 141-172 the chain is Cytoplasmic; it reads RHCLLPVFSRPGDWVAIRWQLAPAQAALLQAA. A helical transmembrane segment spans residues 173 to 193; it reads GLGLLVACVFMLLPALVLWGV. The pore-forming intramembrane region spans 199 to 227; the sequence is LLEAIYFCFGSLSTIGLGDLLPAHGRGLH. Residues 233-253 traverse the membrane as a helical segment; sequence LGQFALLGYLLLGLLAMLLAV. Over 254-307 the chain is Cytoplasmic; sequence ETFSELPQVRAMVKFFGPSGSRTDEDQDGILGQDELALSTVLPDAPVLGPTTPA.

The protein belongs to the two pore domain potassium channel (TC 1.A.1.8) family. Homodimer. As to expression, detected in embryo, eye, lung and liver. Weakly expressed in colon, testis, atria, kidney, intestine, bladder, uterus, ovary, salivary gland, thymus and brain stem. Not detected in brain, cerebellum, spinal cord, heart, ventricle, skeletal muscle, liver, placenta and pancreas. In the eye, highly expressed in the retinal ganglion cell layer and inner nuclear layer.

The protein resides in the membrane. In terms of biological role, probable potassium channel subunit. No channel activity observed in vitro as protein remains in the endoplasmic reticulum. May need to associate with an as yet unknown partner in order to reach the plasma membrane. This chain is Potassium channel subfamily K member 7 (Kcnk7), found in Mus musculus (Mouse).